The chain runs to 142 residues: Centromere protein S (142 aa).

Positions 107-142 are disordered; the sequence is LKGKAKKKRKPEDESRSSRESMAEELDGAEELQSES. Positions 116 to 128 are enriched in basic and acidic residues; sequence KPEDESRSSRESM. Over residues 129–142 the composition is skewed to acidic residues; the sequence is AEELDGAEELQSES.

The protein belongs to the TAF9 family. CENP-S/MHF1 subfamily. Heterodimer with CENPX, sometimes called MHF; this interaction stabilizes both partners. MHF heterodimers can assemble to form tetrameric structures. MHF also coassemble with CENPT-CENPW heterodimers at centromeres to form the tetrameric CENP-T-W-S-X complex. Forms a discrete complex with FANCM and CENPX, called FANCM-MHF; this interaction, probably mediated by direct binding between CENPS and FANCM, leads to synergistic activation of double-stranded DNA binding and strongly stimulates FANCM-mediated DNA remodeling. Recruited by FANCM to the Fanconi anemia (FA) core complex, which consists of CENPS, CENPX, FANCA, FANCB, FANCC, FANCE, FANCF, FANCG, FANCL, FANCM, FAAP24 and FAAP100. The FA core complex associates with Bloom syndrome (BLM) complex, which consists of at least BLM, DNA topoisomerase 3-alpha (TOP3A), RMI1/BLAP75, RPA1/RPA70 and RPA2/RPA32. The super complex between FA and BLM is called BRAFT. Component of the CENPA-CAD complex, composed of CENPI, CENPK, CENPL, CENPO, CENPP, CENPQ, CENPR and CENPS. The CENPA-CAD complex is probably recruited on centromeres by the CENPA-NAC complex, at least composed of CENPA, CENPC, CENPH, CENPM, CENPN, CENPT and CENPU.

Its subcellular location is the nucleus. The protein localises to the chromosome. It is found in the centromere. The protein resides in the kinetochore. DNA-binding component of the Fanconi anemia (FA) core complex. Required for the normal activation of the FA pathway, leading to monoubiquitination of the FANCI-FANCD2 complex in response to DNA damage, cellular resistance to DNA cross-linking drugs, and prevention of chromosomal breakage. In complex with CENPX (MHF heterodimer), crucial cofactor for FANCM in both binding and ATP-dependent remodeling of DNA. Stabilizes FANCM. In complex with CENPX and FANCM (but not other FANC proteins), rapidly recruited to blocked forks and promotes gene conversion at blocked replication forks. In complex with CENPT, CENPW and CENPX (CENP-T-W-S-X heterotetramer), involved in the formation of a functional kinetochore outer plate, which is essential for kinetochore-microtubule attachment and faithful mitotic progression. As a component of MHF and CENP-T-W-S-X complexes, binds DNA and bends it to form a nucleosome-like structure. DNA-binding function is fulfilled in the presence of CENPX, with the following preference for DNA substates: Holliday junction &gt; double-stranded &gt; splay arm &gt; single-stranded. Does not bind DNA on its own. This chain is Centromere protein S (Cenps), found in Mus musculus (Mouse).